A 189-amino-acid chain; its full sequence is Peptidyl-tRNA hydrolase (189 aa).

Tyrosine 15 is a binding site for tRNA. The Proton acceptor role is filled by histidine 20. Residues phenylalanine 66, asparagine 68, and asparagine 114 each contribute to the tRNA site.

This sequence belongs to the PTH family. As to quaternary structure, monomer.

It is found in the cytoplasm. The enzyme catalyses an N-acyl-L-alpha-aminoacyl-tRNA + H2O = an N-acyl-L-amino acid + a tRNA + H(+). Its function is as follows. Hydrolyzes ribosome-free peptidyl-tRNAs (with 1 or more amino acids incorporated), which drop off the ribosome during protein synthesis, or as a result of ribosome stalling. In terms of biological role, catalyzes the release of premature peptidyl moieties from peptidyl-tRNA molecules trapped in stalled 50S ribosomal subunits, and thus maintains levels of free tRNAs and 50S ribosomes. The chain is Peptidyl-tRNA hydrolase from Streptococcus sanguinis (strain SK36).